Reading from the N-terminus, the 1006-residue chain is MKLLSVCAVALLAAQAAGASIKHKLNGFTIMEHSDPAKRELLQKYVTWDEKSLFVNGERIMIFSGEVHPFRLPVPSLWLDVFQKIKALGFNCVSFYVDWALLEGKPGKYRAEGNFALEPFFDAAKQAGIYLLARPGPYINAEASGGGFPGWLQRVNGTLRTSDPAYLKATDNYIAHVAATVAKGQITNGGPVILYQPENEYSGACCNATFPDGDYMQYVIDQARNAGIVVPLINNDAWTGGHNAPGTGKGEVDIYGHDSYPLGFDCGHPSVWPKGNLPTTFRTDHLRESPTTPYSLIEFQAGSFDPWGGPGFAACAALVNHEFERVFYKNDLSFGAAILNLYMTFGGTNWGNLGHPGGYTSYDYGSPLTESRNVTREKYSELKLIGNFVKASPSYLLATPGNLTTSGYADTADLTVTPLLGNGTGSYFVVRHTDYTSQASTPYKLSLPTSAGRLTVPQLGGTLTLNGRDSKVHVVDYNVAGTNILYSTAEVFTWKKFGDSKVLVLYGGPGEHHELAVSLKSDVQVVEGSNSEFTSKKVEDVVVVAWDVSASRRIVQIGDLKIFLLDRNSAYNYWVPQLDKDDSSTGYSSEKTTASSIIVKAGYLVRTAYTKGSGLYLTADFNATTPVEVIGAPSNVRNLYINGEKTQFKTDKNGIWSTGVKYSAPKIKLPSMKDLDWKYLDTLPEVQSTYDDSAWPAADLDTTPNTLRPLTMPKSLHSSDYGFHTGYLIYRGHFVADGSETTFDVRTQGGSAFGSSVWLNEAFLGSWTGLNANADYNSTYRLPQVEKGKNYVLTVVIDTMGLNENWVVGTDEMKNPRGILSYKLSGRDASAITWKLTGNLGGEDYQDKIRGPLNEGGLYAERQGFHQPEPPSKKWKSASPLDGLSKPGIGFYTAQFDLDIPSGWDVPLYFNFGNSTKSAYRVQLYVNGYQYGKFVSNIGPQTSFPVPQGILNYQGTNWVALTLWALESDGAKLDDFELVNTTPVMTALSKIRPSKQPNYRQRKGAY.

The first 18 residues, 1–18, serve as a signal peptide directing secretion; the sequence is MKLLSVCAVALLAAQAAG. The substrate site is built by Y96, N140, A141, and E142. N-linked (GlcNAc...) asparagine glycosylation is present at N156. N199 contributes to the substrate binding site. E200 functions as the Proton donor in the catalytic mechanism. C205 and C206 are joined by a disulfide. N207 carries N-linked (GlcNAc...) asparagine glycosylation. Residue Y260 coordinates substrate. C266 and C315 are disulfide-bonded. The active-site Nucleophile is the E298. A substrate-binding site is contributed by Y364. N-linked (GlcNAc...) asparagine glycosylation is found at N373, N402, N422, N622, N777, and N914.

This sequence belongs to the glycosyl hydrolase 35 family.

The protein resides in the secreted. The enzyme catalyses Hydrolysis of terminal non-reducing beta-D-galactose residues in beta-D-galactosides.. Functionally, cleaves beta-linked terminal galactosyl residues from gangliosides, glycoproteins, and glycosaminoglycans. This is Probable beta-galactosidase A (lacA) from Neosartorya fischeri (strain ATCC 1020 / DSM 3700 / CBS 544.65 / FGSC A1164 / JCM 1740 / NRRL 181 / WB 181) (Aspergillus fischerianus).